The following is a 292-amino-acid chain: uncharacterized protein (292 aa).

4 residues coordinate NADP(+): Leu-17, Asp-55, Asn-82, and Lys-115. Ser-134 acts as the Proton donor in catalysis. Positions 148, 152, and 184 each coordinate NADP(+). Tyr-148 serves as the catalytic Proton acceptor. Lys-152 acts as the Lowers pKa of active site Tyr in catalysis.

This sequence belongs to the short-chain dehydrogenases/reductases (SDR) family.

The protein localises to the cytoplasm. This is an uncharacterized protein from Schizosaccharomyces pombe (strain 972 / ATCC 24843) (Fission yeast).